The following is a 1017-amino-acid chain: Disease resistance protein RML1B (1017 aa).

One can recognise a TIR domain in the interval 12 to 176 (YKFNVFASFH…KIARDVLDKL (165 aa)). Glu87 is an active-site residue. The NB-ARC domain occupies 191 to 447 (EAHLREIKSL…HIAIFFNKED (257 aa)). LRR repeat units follow at residues 539 to 562 (ISRI…QFLK), 583 to 605 (PCLL…TFNP), 606 to 628 (EHLV…TQPL), 629 to 652 (KNLK…SNAT), 654 to 675 (LEYL…ISHL), 676 to 698 (HKLE…HMNL), 699 to 724 (ESLQ…NIRY), 738 to 760 (CPGL…THLP), 761 to 782 (TSLT…CFKS), and 784 to 809 (HQLK…SLLT).

The catalysed reaction is NAD(+) + H2O = ADP-D-ribose + nicotinamide + H(+). TIR-NB-LRR receptor-like protein that confers resistance to the pathogen Leptosphaeria maculans (blackleg disease). The protein is Disease resistance protein RML1B of Arabidopsis thaliana (Mouse-ear cress).